We begin with the raw amino-acid sequence, 891 residues long: DNA polymerase I (891 aa).

The 5'-3' exonuclease domain maps to 1 to 313; the sequence is MEQPVIKEGT…LLDNTPALDN (313 aa). The 3'-5' exonuclease domain maps to 314–488; the sequence is TPKKSCMIVL…RLCEYFEKGG (175 aa). The polymerase stretch occupies residues 492 to 890; sequence NLLSLAREIE…FIAKRWNELK (399 aa).

The protein belongs to the DNA polymerase type-A family. As to quaternary structure, single-chain monomer with multiple functions.

It carries out the reaction DNA(n) + a 2'-deoxyribonucleoside 5'-triphosphate = DNA(n+1) + diphosphate. Functionally, in addition to polymerase activity, this DNA polymerase exhibits 3'-5' and 5'-3' exonuclease activity. The protein is DNA polymerase I (polA) of Helicobacter pylori (strain ATCC 700392 / 26695) (Campylobacter pylori).